Reading from the N-terminus, the 280-residue chain is Nuclear egress protein 1 (280 aa).

A CCCH-type zinc finger spans residues 86–203 (CLTLSPYGHS…YIIFTSLTLH (118 aa)).

Belongs to the herpesviridae NEC1 protein family. Forms a heterohexameric complex with NEC2. Interacts with capsid vertex specific component 2/CVC2; this interaction directs the capsid to the host inner nuclear membrane to initiate budding. In terms of processing, phosphorylated at serine residues in the N-terminus. This phosphorylation regulates the localization within the inner nuclear membrane.

The protein localises to the host nucleus inner membrane. Its function is as follows. Plays an essential role in virion nuclear egress, the first step of virion release from infected cell. Within the host nucleus, NEC1 interacts with the newly formed capsid through the vertexes and directs it to the inner nuclear membrane by associating with NEC2. Induces the budding of the capsid at the inner nuclear membrane as well as its envelopment into the perinuclear space. There, the NEC1/NEC2 complex promotes the fusion of the enveloped capsid with the outer nuclear membrane and the subsequent release of the viral capsid into the cytoplasm where it will reach the secondary budding sites in the host Golgi or trans-Golgi network. This chain is Nuclear egress protein 1, found in Alcelaphine herpesvirus 1 (strain C500) (AlHV-1).